The chain runs to 116 residues: uncharacterized protein (116 aa).

3 consecutive transmembrane segments (helical) span residues 8-28 (FMIY…VSFA), 39-59 (GLLL…NPPF), and 75-95 (FLLI…YLMV).

It to M.jannaschii MJ1580.

Its subcellular location is the cell membrane. This is an uncharacterized protein from Methanothermobacter thermautotrophicus (strain ATCC 29096 / DSM 1053 / JCM 10044 / NBRC 100330 / Delta H) (Methanobacterium thermoautotrophicum).